The chain runs to 865 residues: Valine--tRNA ligase (865 aa).

Positions 43–53 match the 'HIGH' region motif; sequence PNITGRIHMGH. Positions 523–527 match the 'KMSKS' region motif; sequence KMSKS. Position 526 (lysine 526) interacts with ATP. Positions 797 to 865 form a coiled coil; that stretch reads GLIDFEKEKE…RLESILRDLE (69 aa).

The protein belongs to the class-I aminoacyl-tRNA synthetase family. ValS type 1 subfamily. In terms of assembly, monomer.

It localises to the cytoplasm. The enzyme catalyses tRNA(Val) + L-valine + ATP = L-valyl-tRNA(Val) + AMP + diphosphate. Catalyzes the attachment of valine to tRNA(Val). As ValRS can inadvertently accommodate and process structurally similar amino acids such as threonine, to avoid such errors, it has a 'posttransfer' editing activity that hydrolyzes mischarged Thr-tRNA(Val) in a tRNA-dependent manner. This Thermotoga maritima (strain ATCC 43589 / DSM 3109 / JCM 10099 / NBRC 100826 / MSB8) protein is Valine--tRNA ligase.